A 239-amino-acid polypeptide reads, in one-letter code: Fatty acid metabolism regulator protein (239 aa).

The HTH gntR-type domain maps to 6-74 (KGPASFAEKY…HGKPTQVNNF (69 aa)). Residues 34 to 53 (ERELSELIGVTRTTLREVLQ) constitute a DNA-binding region (H-T-H motif).

As to quaternary structure, homodimer.

The protein localises to the cytoplasm. In terms of biological role, multifunctional regulator of fatty acid metabolism. This is Fatty acid metabolism regulator protein from Shewanella denitrificans (strain OS217 / ATCC BAA-1090 / DSM 15013).